The chain runs to 386 residues: MAGKRQSQDPVNAIKVVASTMLNSFLEDLKEKNVLNKQELQTMGQTVNVITKKTENLVGDLTEKTQVVGKIFKDHFLNSGSLLSLKSHAENEDECSESSSAVLQEIQASQVKVRKLCPCDHSHEPKITNVHEIYPVMEKEGRTRLALIICNSEFDYLSKRQGSEIDILGMQDLLENLGYSVVVKENLSALEMKTELKNFAARQEHKFSDSTFLVFMSHGTLDGICGTKHRNEEPDILHDDTIFQIFNNRNCRSLKDKPKVIIMQACRGRGDGAVWVTDVGEASAWTCDQPLQCYIFNDAIEKTHVEKDFIAFKSSTPHNVSWRLNTDGSLFISHLIHYFREFSCCHHLEEIFRKVQNSFETPNTMIQMPTIERVSMTRYFYLFPGN.

Positions 1–91 constitute a CARD domain; it reads MAGKRQSQDP…LLSLKSHAEN (91 aa). Ser-84 carries the phosphoserine modification. Catalysis depends on residues His-218 and Cys-266.

Belongs to the peptidase C14A family. In terms of assembly, heterotetramer that consists of two anti-parallel arranged heterodimers, each one formed by two subunits (Potential). May interact with TRAF2.

Functionally, involved in the activation cascade of caspases responsible for apoptosis execution. In Canis lupus familiaris (Dog), this protein is Caspase-12.